Consider the following 447-residue polypeptide: Rab GDP dissociation inhibitor alpha (447 aa).

Ser427 is subject to Phosphoserine.

It belongs to the Rab GDI family. As to quaternary structure, interacts with RHOH. Interacts with the non-phosphorylated forms of RAB1A, RAB3A, RAB5A, RAB5B, RAB5C, RAB8A, RAB8B, RAB10, RAB12, RAB35, and RAB43. In terms of tissue distribution, high expression in brain, lower in other tissues.

It is found in the cytoplasm. The protein resides in the golgi apparatus. Its subcellular location is the trans-Golgi network. Its function is as follows. Regulates the GDP/GTP exchange reaction of most Rab proteins by inhibiting the dissociation of GDP from them, and the subsequent binding of GTP to them. Promotes the dissociation of GDP-bound Rab proteins from the membrane and inhibits their activation. Promotes the dissociation of RAB1A, RAB3A, RAB5A and RAB10 from membranes. This is Rab GDP dissociation inhibitor alpha (Gdi1) from Rattus norvegicus (Rat).